A 180-amino-acid chain; its full sequence is Inosine/xanthosine triphosphatase (180 aa).

8-13 (TTNPAK) lines the substrate pocket. The Mg(2+) site is built by Asp-38 and Glu-68. 68–69 (EA) is a binding site for substrate.

It belongs to the YjjX NTPase family. In terms of assembly, homodimer. Requires Mg(2+) as cofactor. Mn(2+) is required as a cofactor.

The enzyme catalyses XTP + H2O = XDP + phosphate + H(+). The catalysed reaction is ITP + H2O = IDP + phosphate + H(+). Its function is as follows. Phosphatase that hydrolyzes non-canonical purine nucleotides such as XTP and ITP to their respective diphosphate derivatives. Probably excludes non-canonical purines from DNA/RNA precursor pool, thus preventing their incorporation into DNA/RNA and avoiding chromosomal lesions. The protein is Inosine/xanthosine triphosphatase of Yersinia pseudotuberculosis serotype IB (strain PB1/+).